Consider the following 290-residue polypeptide: Small ribosomal subunit biogenesis GTPase RsgA (290 aa).

The CP-type G domain maps to 61-218; that stretch reads KSELVRPTVA…IVDTPGFSTL (158 aa). Residues 110-113 and 161-169 each bind GTP; these read NKID and GPSGAGKST. Residues Cys243, Cys248, His250, and Cys256 each coordinate Zn(2+).

This sequence belongs to the TRAFAC class YlqF/YawG GTPase family. RsgA subfamily. In terms of assembly, monomer. Associates with 30S ribosomal subunit, binds 16S rRNA. Zn(2+) is required as a cofactor.

Its subcellular location is the cytoplasm. Its function is as follows. One of several proteins that assist in the late maturation steps of the functional core of the 30S ribosomal subunit. Helps release RbfA from mature subunits. May play a role in the assembly of ribosomal proteins into the subunit. Circularly permuted GTPase that catalyzes slow GTP hydrolysis, GTPase activity is stimulated by the 30S ribosomal subunit. The sequence is that of Small ribosomal subunit biogenesis GTPase RsgA from Clostridium beijerinckii (strain ATCC 51743 / NCIMB 8052) (Clostridium acetobutylicum).